The following is a 304-amino-acid chain: Trypsin-3 (304 aa).

A Peptidase S1 domain is found at 81–301 (IVGGYTCEEN…YVDWIKDTIA (221 aa)). 5 disulfides stabilise this stretch: cysteine 87-cysteine 217, cysteine 105-cysteine 121, cysteine 196-cysteine 263, cysteine 228-cysteine 242, and cysteine 253-cysteine 277. The Charge relay system role is filled by histidine 120. Ca(2+) is bound by residues glutamate 132, asparagine 134, valine 137, glutamate 139, and glutamate 142. Aspartate 164 acts as the Charge relay system in catalysis. Tyrosine 211 carries the sulfotyrosine modification. Serine 257 serves as the catalytic Charge relay system.

Belongs to the peptidase S1 family. Requires Ca(2+) as cofactor. Detected in pancreas and pancreatic fluid (at protein level). Expressed in pancreas and brain. Detected in ileum.

The protein localises to the secreted. The enzyme catalyses Preferential cleavage: Arg-|-Xaa, Lys-|-Xaa.. Not inhibited by Kunitz-type trypsin inhibitors. Functionally, digestive protease that cleaves proteins preferentially after an Arg residue and has proteolytic activity toward Kunitz-type trypsin inhibitors. The protein is Trypsin-3 (PRSS3) of Homo sapiens (Human).